A 724-amino-acid chain; its full sequence is Catalase-peroxidase (724 aa).

The segment at residues 98-226 (WHSAGSYRIA…LAAVMMGLIY (129 aa)) is a cross-link (tryptophyl-tyrosyl-methioninium (Trp-Tyr) (with M-252)). The active-site Proton acceptor is H99. Residues 226-252 (YVNPEGVDGHPDPQKTANDVRVTFARM) constitute a cross-link (tryptophyl-tyrosyl-methioninium (Tyr-Met) (with W-98)). H267 provides a ligand contact to heme b.

It belongs to the peroxidase family. Peroxidase/catalase subfamily. In terms of assembly, homodimer or homotetramer. The cofactor is heme b. Post-translationally, formation of the three residue Trp-Tyr-Met cross-link is important for the catalase, but not the peroxidase activity of the enzyme.

The catalysed reaction is H2O2 + AH2 = A + 2 H2O. The enzyme catalyses 2 H2O2 = O2 + 2 H2O. Its function is as follows. Bifunctional enzyme with both catalase and broad-spectrum peroxidase activity. This chain is Catalase-peroxidase, found in Edwardsiella tarda.